The primary structure comprises 652 residues: DNA ligase (652 aa).

Residues 29 to 33 (DSEYD), 78 to 79 (SL), and Glu107 contribute to the NAD(+) site. Lys109 serves as the catalytic N6-AMP-lysine intermediate. The NAD(+) site is built by Arg130, Glu164, Lys278, and Lys302. Zn(2+) contacts are provided by Cys395, Cys398, Cys413, and Cys418. Residues 577 to 652 (AADAVLSGKT…IQDEAWLEQL (76 aa)) form the BRCT domain.

The protein belongs to the NAD-dependent DNA ligase family. LigA subfamily. The cofactor is Mg(2+). Mn(2+) serves as cofactor.

It carries out the reaction NAD(+) + (deoxyribonucleotide)n-3'-hydroxyl + 5'-phospho-(deoxyribonucleotide)m = (deoxyribonucleotide)n+m + AMP + beta-nicotinamide D-nucleotide.. Functionally, DNA ligase that catalyzes the formation of phosphodiester linkages between 5'-phosphoryl and 3'-hydroxyl groups in double-stranded DNA using NAD as a coenzyme and as the energy source for the reaction. It is essential for DNA replication and repair of damaged DNA. This Streptococcus gordonii (strain Challis / ATCC 35105 / BCRC 15272 / CH1 / DL1 / V288) protein is DNA ligase.